The following is a 237-amino-acid chain: MTPQAFYQVLIEHGITLTDKQKKQFETYFRLLVEWNEKINLTAITDKEEVYLKHFYDSIAPILQGYIDNSPLSILDIGAGAGFPSIPMKILYPEIDITIIDSLNKRINFLNILANELELSGVHFFHGRAEDFGQDRVFRAKFDIVTARAVARMQVLAELTIPFLKVNGRLIALKAAAAEEELISAEKALKTLFSQVTVNKNYKLPNGDDRNITIVSKKKETPNKYPRKAGTPNKKPL.

S-adenosyl-L-methionine-binding positions include Gly78, Phe83, 129–130, and Arg148; that span reads AE. Positions 216–237 are disordered; it reads SKKKETPNKYPRKAGTPNKKPL.

It belongs to the methyltransferase superfamily. RNA methyltransferase RsmG family.

It is found in the cytoplasm. Its function is as follows. Specifically methylates the N7 position of a guanine in 16S rRNA. This Streptococcus agalactiae serotype Ia (strain ATCC 27591 / A909 / CDC SS700) protein is Ribosomal RNA small subunit methyltransferase G.